The primary structure comprises 864 residues: Leucine--tRNA ligase (864 aa).

Residues 42 to 52 (PYPSGRLHMGH) carry the 'HIGH' region motif. A 'KMSKS' region motif is present at residues 621–625 (KMSKS). ATP is bound at residue Lys624.

Belongs to the class-I aminoacyl-tRNA synthetase family.

It is found in the cytoplasm. The catalysed reaction is tRNA(Leu) + L-leucine + ATP = L-leucyl-tRNA(Leu) + AMP + diphosphate. The protein is Leucine--tRNA ligase of Alkalilimnicola ehrlichii (strain ATCC BAA-1101 / DSM 17681 / MLHE-1).